The chain runs to 446 residues: UDP-N-acetylmuramoylalanine--D-glutamate ligase (446 aa).

Glycine 115 to threonine 121 contributes to the ATP binding site.

Belongs to the MurCDEF family.

The protein resides in the cytoplasm. The catalysed reaction is UDP-N-acetyl-alpha-D-muramoyl-L-alanine + D-glutamate + ATP = UDP-N-acetyl-alpha-D-muramoyl-L-alanyl-D-glutamate + ADP + phosphate + H(+). It participates in cell wall biogenesis; peptidoglycan biosynthesis. In terms of biological role, cell wall formation. Catalyzes the addition of glutamate to the nucleotide precursor UDP-N-acetylmuramoyl-L-alanine (UMA). This chain is UDP-N-acetylmuramoylalanine--D-glutamate ligase, found in Pelobacter propionicus (strain DSM 2379 / NBRC 103807 / OttBd1).